Here is a 164-residue protein sequence, read N- to C-terminus: 6,7-dimethyl-8-ribityllumazine synthase (164 aa).

5-amino-6-(D-ribitylamino)uracil is bound by residues phenylalanine 28, 62-64 (ALE), and 86-88 (AVI). 91-92 (ET) serves as a coordination point for (2S)-2-hydroxy-3-oxobutyl phosphate. The Proton donor role is filled by histidine 94. Asparagine 119 is a 5-amino-6-(D-ribitylamino)uracil binding site. Arginine 133 contributes to the (2S)-2-hydroxy-3-oxobutyl phosphate binding site.

It belongs to the DMRL synthase family.

It carries out the reaction (2S)-2-hydroxy-3-oxobutyl phosphate + 5-amino-6-(D-ribitylamino)uracil = 6,7-dimethyl-8-(1-D-ribityl)lumazine + phosphate + 2 H2O + H(+). The protein operates within cofactor biosynthesis; riboflavin biosynthesis; riboflavin from 2-hydroxy-3-oxobutyl phosphate and 5-amino-6-(D-ribitylamino)uracil: step 1/2. In terms of biological role, catalyzes the formation of 6,7-dimethyl-8-ribityllumazine by condensation of 5-amino-6-(D-ribitylamino)uracil with 3,4-dihydroxy-2-butanone 4-phosphate. This is the penultimate step in the biosynthesis of riboflavin. This chain is 6,7-dimethyl-8-ribityllumazine synthase, found in Nitrosomonas europaea (strain ATCC 19718 / CIP 103999 / KCTC 2705 / NBRC 14298).